The following is a 501-amino-acid chain: Glycerol kinase (501 aa).

Thr-12 is an ADP binding site. Residues Thr-12, Thr-13, and Ser-14 each contribute to the ATP site. Thr-12 lines the sn-glycerol 3-phosphate pocket. Arg-16 provides a ligand contact to ADP. Residues Arg-82, Glu-83, Tyr-134, and Asp-244 each coordinate sn-glycerol 3-phosphate. Arg-82, Glu-83, Tyr-134, Asp-244, and Gln-245 together coordinate glycerol. ADP contacts are provided by Thr-266 and Gly-310. Residues Thr-266, Gly-310, Gln-314, and Gly-411 each contribute to the ATP site. ADP is bound by residues Gly-411 and Asn-415.

Belongs to the FGGY kinase family.

The catalysed reaction is glycerol + ATP = sn-glycerol 3-phosphate + ADP + H(+). Its pathway is polyol metabolism; glycerol degradation via glycerol kinase pathway; sn-glycerol 3-phosphate from glycerol: step 1/1. With respect to regulation, inhibited by fructose 1,6-bisphosphate (FBP). Key enzyme in the regulation of glycerol uptake and metabolism. Catalyzes the phosphorylation of glycerol to yield sn-glycerol 3-phosphate. The sequence is that of Glycerol kinase from Methylorubrum populi (strain ATCC BAA-705 / NCIMB 13946 / BJ001) (Methylobacterium populi).